Here is a 105-residue protein sequence, read N- to C-terminus: Large ribosomal subunit protein eL36 (105 aa).

The protein belongs to the eukaryotic ribosomal protein eL36 family. As to quaternary structure, component of the large ribosomal subunit.

Its subcellular location is the cytoplasm. The protein resides in the cytosol. Functionally, component of the large ribosomal subunit. The ribosome is a large ribonucleoprotein complex responsible for the synthesis of proteins in the cell. The polypeptide is Large ribosomal subunit protein eL36 (rpl36) (Danio rerio (Zebrafish)).